A 145-amino-acid chain; its full sequence is Transcription elongation factor 1 (145 aa).

Positions 25, 28, 49, and 52 each coordinate Zn(2+). S55 is modified (phosphoserine). The disordered stretch occupies residues 80–145 (VNSGRGSDTD…RGALVDSDDE (66 aa)). Acidic residues-rich tracts occupy residues 88–104 (TDDG…SDSE) and 113–126 (GEID…DSDE). 3 positions are modified to phosphoserine: S117, S124, and S142.

This sequence belongs to the ELOF1 family.

It is found in the nucleus. Functionally, transcription elongation factor implicated in the maintenance of proper chromatin structure in actively transcribed regions. This Saccharomyces cerevisiae (strain ATCC 204508 / S288c) (Baker's yeast) protein is Transcription elongation factor 1 (ELF1).